The chain runs to 467 residues: Ankyrin repeat and SOCS box protein 10 (467 aa).

ANK repeat units follow at residues 115-144, 147-176, 180-209, 214-243, 247-289, 293-322, and 326-361; these read ELTTPLHVAASRGHTEVLELLLRRRAKPDS, GGRTALHEACSAGHAACVRVLLVAGADPNT, DGKRPLHLCRGPGILECVELLLKFGAQVDG, EEETPLHIAARLGHVELADLLLRWGACPDV, EGWT…DADA, DKQRPLHLACRHGHSAVVQLLLSCGVNANA, and GGHTPLHCALLGPTTAVAHSPEHTVRDLLNHGAVRV. The SOCS box domain occupies 412–467; it reads YSSLFALVRQPRSLQHLCRCALRSHLEGCLPHALPRLPLPPRMLRFLQLDFEDLLY.

This sequence belongs to the ankyrin SOCS box (ASB) family.

It localises to the nucleus. The protein localises to the cytoplasm. It participates in protein modification; protein ubiquitination. Functionally, may be a substrate-recognition component of a SCF-like ECS (Elongin-Cullin-SOCS-box protein) E3 ubiquitin-protein ligase complex which mediates the ubiquitination and subsequent proteasomal degradation of target proteins. The protein is Ankyrin repeat and SOCS box protein 10 (Asb10) of Mus musculus (Mouse).